Here is a 130-residue protein sequence, read N- to C-terminus: Small ribosomal subunit protein uS9 (130 aa).

The protein belongs to the universal ribosomal protein uS9 family.

This Acidovorax ebreus (strain TPSY) (Diaphorobacter sp. (strain TPSY)) protein is Small ribosomal subunit protein uS9.